We begin with the raw amino-acid sequence, 221 residues long: Endonuclease V (221 aa).

Positions 43 and 109 each coordinate Mg(2+).

It belongs to the endonuclease V family. Mg(2+) serves as cofactor.

The protein localises to the cytoplasm. The enzyme catalyses Endonucleolytic cleavage at apurinic or apyrimidinic sites to products with a 5'-phosphate.. Functionally, DNA repair enzyme involved in the repair of deaminated bases. Selectively cleaves double-stranded DNA at the second phosphodiester bond 3' to a deoxyinosine leaving behind the intact lesion on the nicked DNA. This chain is Endonuclease V, found in Petrotoga mobilis (strain DSM 10674 / SJ95).